Here is a 233-residue protein sequence, read N- to C-terminus: Zinc metalloproteinase recombinant fibrinogenase II (233 aa).

Residues 19–215 form the Peptidase M12B domain; that stretch reads KYVETVFVVD…HNPECIDNEP (197 aa). Ca(2+) is bound by residues E22 and D106. 3 disulfides stabilise this stretch: C130–C210, C170–C194, and C172–C177. H155 is a binding site for Zn(2+). E156 is a catalytic residue. Residues H159 and H165 each coordinate Zn(2+). N-linked (GlcNAc...) asparagine glycosylation is present at N193. Positions 210, 213, 228, 230, and 232 each coordinate Ca(2+).

This sequence belongs to the venom metalloproteinase (M12B) family. P-III subfamily. Requires Zn(2+) as cofactor. As to expression, expressed by the venom gland.

Its subcellular location is the secreted. With respect to regulation, inhibited by PMSF and EDTA. Slightly inhibited by Cu(2+) and Zn(2+). Not inhibited by aprotinin, SBTI, Ca(2+), Mg(2+), Na(+) and K(+). Its function is as follows. Snake venom zinc metalloprotease that acts at several levels. It has direct fibrino(geno)lytic activity (Aalpha chain of fibrinogen is cleaved quickly, Bbeta chain slowly, and gamma chain even more slowly) and degradation of TNF-alpha. These activities permit to protect against sepsis and disseminated intravascular coagulation. It inhibits ADP-induced platelet aggregation in human platelet-rich plasma (IC(50)=65.4 ug/ml). It decreases the activity of complement by degrading human C5, C6 and C9 in vitro, decreasing serum levels of C1q, C3 and C4 in rat, and inhibiting the MAC deposition on HUVECs membrane. This inhibition of complement protects against hyperacute rejection that is the main barrier in xenotransplantation. Has preference for Lys at the P1 position. Cleaves insulin B chain at '36-Val-|-Glu-37', '39-Leu-|-Tyr-40', and '48-Phe-|-Phe-49' bonds. Also cleaves fibronectin and type IV collagen. This is Zinc metalloproteinase recombinant fibrinogenase II from Deinagkistrodon acutus (Hundred-pace snake).